The primary structure comprises 199 residues: Recombination protein RecR (199 aa).

The segment at 58 to 73 adopts a C4-type zinc-finger fold; it reads CLVCGNVTGSDICPIC. One can recognise a Toprim domain in the interval 81–176; it reads GEICVVTDVA…AVTGLAQGVP (96 aa).

This sequence belongs to the RecR family.

May play a role in DNA repair. It seems to be involved in an RecBC-independent recombinational process of DNA repair. It may act with RecF and RecO. This is Recombination protein RecR from Paracoccus denitrificans (strain Pd 1222).